Consider the following 202-residue polypeptide: ATP-dependent Clp protease proteolytic subunit (202 aa).

The Nucleophile role is filled by serine 101. Histidine 126 is an active-site residue.

This sequence belongs to the peptidase S14 family. In terms of assembly, component of the chloroplastic Clp protease core complex.

The protein localises to the plastid. It localises to the chloroplast stroma. The catalysed reaction is Hydrolysis of proteins to small peptides in the presence of ATP and magnesium. alpha-casein is the usual test substrate. In the absence of ATP, only oligopeptides shorter than five residues are hydrolyzed (such as succinyl-Leu-Tyr-|-NHMec, and Leu-Tyr-Leu-|-Tyr-Trp, in which cleavage of the -Tyr-|-Leu- and -Tyr-|-Trp bonds also occurs).. Functionally, cleaves peptides in various proteins in a process that requires ATP hydrolysis. Has a chymotrypsin-like activity. Plays a major role in the degradation of misfolded proteins. In Drimys granadensis, this protein is ATP-dependent Clp protease proteolytic subunit.